The chain runs to 89 residues: Translation initiation factor IF-1, chloroplastic (89 aa).

The S1-like domain occupies 1–73; it reads MKEKEAKWVV…TKGRIIYRLP (73 aa).

The protein belongs to the IF-1 family. In terms of assembly, component of the 30S ribosomal translation pre-initiation complex which assembles on the 30S ribosome in the order IF-2 and IF-3, IF-1 and N-formylmethionyl-tRNA(fMet); mRNA recruitment can occur at any time during PIC assembly.

The protein localises to the plastid. It is found in the chloroplast. One of the essential components for the initiation of protein synthesis. Stabilizes the binding of IF-2 and IF-3 on the 30S subunit to which N-formylmethionyl-tRNA(fMet) subsequently binds. Helps modulate mRNA selection, yielding the 30S pre-initiation complex (PIC). Upon addition of the 50S ribosomal subunit IF-1, IF-2 and IF-3 are released leaving the mature 70S translation initiation complex. In Jasminum nudiflorum (Winter jasmine), this protein is Translation initiation factor IF-1, chloroplastic.